Reading from the N-terminus, the 289-residue chain is RNA-binding protein CP31B, chloroplastic (289 aa).

A chloroplast-targeting transit peptide spans Met-1 to Ser-71. 2 RRM domains span residues Ala-113–Pro-191 and Phe-207–Glu-285.

ADP-ribosylated by the Pseudomonas syringae type III effector HopU1. ADP-ribosylation reduces the ability of the protein to bind RNA.

It localises to the plastid. It is found in the chloroplast. Required for specific RNA editing events in chloroplasts and stabilizes specific chloroplast mRNAs. This Arabidopsis thaliana (Mouse-ear cress) protein is RNA-binding protein CP31B, chloroplastic.